The chain runs to 31 residues: Hemocyanin subunit 2 (31 aa).

This sequence belongs to the tyrosinase family. Hemocyanin subfamily. As to expression, hemolymph.

It is found in the secreted. The protein resides in the extracellular space. In terms of biological role, hemocyanins are copper-containing oxygen carriers occurring freely dissolved in the hemolymph of many mollusks and arthropods. The sequence is that of Hemocyanin subunit 2 from Maja squinado (Mediterranean spider crab).